The primary structure comprises 579 residues: O-fucosyltransferase 24 (579 aa).

The helical; Signal-anchor for type II membrane protein transmembrane segment at 58-78 (LWAFSLFLLSILGISLRLGLC) threads the bilayer. A glycan (N-linked (GlcNAc...) asparagine) is linked at Asn-133. 355-357 (HLR) is a binding site for substrate. N-linked (GlcNAc...) asparagine glycosylation is found at Asn-528, Asn-573, and Asn-576.

The protein belongs to the glycosyltransferase GT106 family.

It is found in the membrane. The protein operates within glycan metabolism. This Arabidopsis thaliana (Mouse-ear cress) protein is O-fucosyltransferase 24.